The sequence spans 1955 residues: Callose synthase 3 (1955 aa).

Residues 1 to 488 (MSATRGGPDQ…FWHVFRSFDR (488 aa)) lie on the Cytoplasmic side of the membrane. Residues 489 to 509 (MWSFYILCLQAMIIMAWDGGQ) traverse the membrane as a helical segment. Residues 510-521 (PSSVFGADVFKK) lie on the Extracellular side of the membrane. A helical membrane pass occupies residues 522–542 (VLSVFITAAIMKLGQAVLDVI). Topologically, residues 543–558 (LNFKAHQSMTLHVKLR) are cytoplasmic. A helical transmembrane segment spans residues 559–579 (YILKVFSAAAWVIILPVTYAY). Residues 580-604 (SWKDPPAFARTIKSWFGSAMHSPSL) are Extracellular-facing. The helical transmembrane segment at 605–625 (FIIAVVSYLSPNMLAGVMFLF) threads the bilayer. At 626–660 (PLLRRFLERSNYRIVMLMMWWSQPRLYVGRGMHES) the chain is on the cytoplasmic side. Residues 661-681 (AFSLFKYTMFWVLLIATKLAF) form a helical membrane-spanning segment. Residues 682-717 (SYYIEIRPLVAPTQAIMKARVTNFQWHEFFPRAKNN) are Extracellular-facing. Residues 718-738 (IGVVIALWAPIILVYFMDSQI) form a helical membrane-spanning segment. Topologically, residues 739 to 1517 (WYAIFSTLFG…FDFFRMMSCY (779 aa)) are cytoplasmic. The helical transmembrane segment at 1518-1538 (FTTVGFYFSTLITVLTVYIFL) threads the bilayer. Topologically, residues 1539-1566 (YGRLYLVLSGLEQGLSTQKGIRDNTPLQ) are extracellular. The chain crosses the membrane as a helical span at residues 1567-1587 (IALASQSFVQIGFLMALPMLM). At 1588-1597 (EIGLERGFRT) the chain is on the cytoplasmic side. A helical membrane pass occupies residues 1598–1618 (ALSEFVLMQLQLAPVFFTFSL). The Extracellular portion of the chain corresponds to 1619–1661 (GTKTHYYGRTLLHGGAKYRSTGRGFVVFHAKFADNYRLYSRSH). A helical transmembrane segment spans residues 1662–1682 (FVKGLEMMLLLVVYQIFGSAY). Over 1683–1688 (RGVLAY) the chain is Cytoplasmic. A helical transmembrane segment spans residues 1689 to 1709 (LLITISMWFMVGTWLFAPFLF). Topologically, residues 1710 to 1761 (NPSGFEWQKIVDDWTDWNKWINNIGGIGVPAEKSWESWWEEEQEHLRYSGKR) are extracellular. Residues 1762–1782 (GIVVEILLALRFFIYQYGLVY) form a helical membrane-spanning segment. At 1783–1792 (HLTITEKTKN) the chain is on the cytoplasmic side. A helical membrane pass occupies residues 1793 to 1813 (FLVYGVSWLVIFLILFVMKTV). Over 1814 to 1833 (SVGRRRFSASFQLMFRLIKG) the chain is Extracellular. A helical membrane pass occupies residues 1834 to 1854 (LIFMTFIAIIVILITLAHMTI). At 1855-1856 (QD) the chain is on the cytoplasmic side. A helical transmembrane segment spans residues 1857 to 1877 (IIVCILAFMPTGWGMLLIAQA). At 1878–1899 (CKPVVHRAGFWGSVRTLARGYE) the chain is on the extracellular side. Residues 1900 to 1920 (IVMGLLLFTPVAFLAWFPFVS) traverse the membrane as a helical segment. Residues 1921-1955 (EFQTRMLFNQAFSRGLQISRILGGHRKDRSSRNKE) lie on the Cytoplasmic side of the membrane.

Belongs to the glycosyltransferase 48 family.

Its subcellular location is the cell membrane. It carries out the reaction [(1-&gt;3)-beta-D-glucosyl](n) + UDP-alpha-D-glucose = [(1-&gt;3)-beta-D-glucosyl](n+1) + UDP + H(+). In terms of biological role, involved in callose synthesis at the forming cell plate during cytokinesis. During plant growth and development, callose is found as a transitory component of the cell plate in dividing cells, is a major component of pollen mother cell walls and pollen tubes, and is found as a structural component of plasmodesmatal canals. The protein is Callose synthase 3 (CALS3) of Arabidopsis thaliana (Mouse-ear cress).